A 121-amino-acid chain; its full sequence is Small ribosomal subunit protein uS13 (121 aa).

Positions 94–121 (GLPMRGQRTRTNARTRKGPRKAAAALKK) are disordered.

It belongs to the universal ribosomal protein uS13 family. Part of the 30S ribosomal subunit. Forms a loose heterodimer with protein S19. Forms two bridges to the 50S subunit in the 70S ribosome.

Located at the top of the head of the 30S subunit, it contacts several helices of the 16S rRNA. In the 70S ribosome it contacts the 23S rRNA (bridge B1a) and protein L5 of the 50S subunit (bridge B1b), connecting the 2 subunits; these bridges are implicated in subunit movement. Contacts the tRNAs in the A and P-sites. The polypeptide is Small ribosomal subunit protein uS13 (Polaromonas sp. (strain JS666 / ATCC BAA-500)).